We begin with the raw amino-acid sequence, 778 residues long: Endonuclease MutS2 (778 aa).

328–335 lines the ATP pocket; sequence GPNTGGKT. Positions 703-778 constitute a Smr domain; the sequence is LDLRGKRYEE…GSGCTIANLG (76 aa).

This sequence belongs to the DNA mismatch repair MutS family. MutS2 subfamily. In terms of assembly, homodimer. Binds to stalled ribosomes, contacting rRNA.

Functionally, endonuclease that is involved in the suppression of homologous recombination and thus may have a key role in the control of bacterial genetic diversity. In terms of biological role, acts as a ribosome collision sensor, splitting the ribosome into its 2 subunits. Detects stalled/collided 70S ribosomes which it binds and splits by an ATP-hydrolysis driven conformational change. Acts upstream of the ribosome quality control system (RQC), a ribosome-associated complex that mediates the extraction of incompletely synthesized nascent chains from stalled ribosomes and their subsequent degradation. Probably generates substrates for RQC. In Streptococcus equi subsp. equi (strain 4047), this protein is Endonuclease MutS2.